The sequence spans 287 residues: Ribosomal RNA small subunit methyltransferase A (287 aa).

The span at 1-15 (MSKTTFDAQSITNSL) shows a compositional bias: polar residues. The tract at residues 1–20 (MSKTTFDAQSITNSLRAAKH) is disordered. S-adenosyl-L-methionine contacts are provided by Asn-29, Leu-31, Gly-56, Glu-77, and Asn-126.

It belongs to the class I-like SAM-binding methyltransferase superfamily. rRNA adenine N(6)-methyltransferase family. RsmA subfamily.

The protein resides in the cytoplasm. The enzyme catalyses adenosine(1518)/adenosine(1519) in 16S rRNA + 4 S-adenosyl-L-methionine = N(6)-dimethyladenosine(1518)/N(6)-dimethyladenosine(1519) in 16S rRNA + 4 S-adenosyl-L-homocysteine + 4 H(+). In terms of biological role, specifically dimethylates two adjacent adenosines (A1518 and A1519) in the loop of a conserved hairpin near the 3'-end of 16S rRNA in the 30S particle. May play a critical role in biogenesis of 30S subunits. This Psychrobacter cryohalolentis (strain ATCC BAA-1226 / DSM 17306 / VKM B-2378 / K5) protein is Ribosomal RNA small subunit methyltransferase A.